The following is a 168-amino-acid chain: Photosystem I assembly protein Ycf3 (168 aa).

3 TPR repeats span residues 35 to 68 (AFTY…EIDP), 72 to 105 (SYIL…NPFL), and 120 to 153 (GEQA…TPGN).

It belongs to the Ycf3 family.

The protein localises to the plastid. Its subcellular location is the chloroplast thylakoid membrane. Essential for the assembly of the photosystem I (PSI) complex. May act as a chaperone-like factor to guide the assembly of the PSI subunits. This is Photosystem I assembly protein Ycf3 from Helianthus annuus (Common sunflower).